Consider the following 251-residue polypeptide: Hydroxyacylglutathione hydrolase (251 aa).

Zn(2+) is bound by residues histidine 53, histidine 55, aspartate 57, histidine 58, histidine 110, aspartate 127, and histidine 165.

It belongs to the metallo-beta-lactamase superfamily. Glyoxalase II family. In terms of assembly, monomer. Zn(2+) is required as a cofactor.

The catalysed reaction is an S-(2-hydroxyacyl)glutathione + H2O = a 2-hydroxy carboxylate + glutathione + H(+). It functions in the pathway secondary metabolite metabolism; methylglyoxal degradation; (R)-lactate from methylglyoxal: step 2/2. Thiolesterase that catalyzes the hydrolysis of S-D-lactoyl-glutathione to form glutathione and D-lactic acid. The sequence is that of Hydroxyacylglutathione hydrolase from Buchnera aphidicola subsp. Acyrthosiphon pisum (strain APS) (Acyrthosiphon pisum symbiotic bacterium).